The following is a 260-amino-acid chain: MRIAIIGGSGVYDPGILTNIHEERVETPYGAAVLKVGTYHGEEIGFMPRHGDKHTVPPHKVNYRANIWALKMLKVERVLATAAVGSTNPEFRPGDFVIVNDFLDFTKTRTYTFFEGGETGVVHTDFTTPYCPELGQVLVETAARLGIKAHAGGVYACTEGPRFETPAEIRMIRQLGGDLVGMTNVPEVVLAHEVGLCYGLIAMVTNMAAGISSTPLSHEEVLEIMDQNGKNLRDLIMQAIPGIPRQRNCRCSLAAGKIEV.

Residues Ser-9 and 49–50 (RH) contribute to the phosphate site. Met-182 contacts substrate. Phosphate is bound at residue Thr-183. Substrate is bound at residue 206-208 (NMA).

This sequence belongs to the PNP/MTAP phosphorylase family. MTAP subfamily. Homohexamer. Dimer of a homotrimer.

It carries out the reaction a purine D-ribonucleoside + phosphate = a purine nucleobase + alpha-D-ribose 1-phosphate. It functions in the pathway purine metabolism; purine nucleoside salvage. Functionally, purine nucleoside phosphorylase which is highly specific for 6-oxopurine nucleosides. Cleaves guanosine or inosine to respective bases and sugar-1-phosphate molecules. Involved in purine salvage. The protein is Probable 6-oxopurine nucleoside phosphorylase of Moorella thermoacetica (strain ATCC 39073 / JCM 9320).